A 488-amino-acid polypeptide reads, in one-letter code: Glutamate--tRNA ligase (488 aa).

The 'HIGH' region motif lies at 8-18; that stretch reads PSPTGPLHIGG. The Zn(2+) site is built by Cys105, Cys107, Cys132, and His134. Positions 249–253 match the 'KMSKS' region motif; that stretch reads KMSKR. An ATP-binding site is contributed by Lys252.

The protein belongs to the class-I aminoacyl-tRNA synthetase family. Glutamate--tRNA ligase type 1 subfamily. Monomer. It depends on Zn(2+) as a cofactor.

The protein localises to the cytoplasm. The catalysed reaction is tRNA(Glu) + L-glutamate + ATP = L-glutamyl-tRNA(Glu) + AMP + diphosphate. Catalyzes the attachment of glutamate to tRNA(Glu) in a two-step reaction: glutamate is first activated by ATP to form Glu-AMP and then transferred to the acceptor end of tRNA(Glu). This Desulfitobacterium hafniense (strain Y51) protein is Glutamate--tRNA ligase.